Consider the following 312-residue polypeptide: Uracil-DNA glycosylase (312 aa).

A compositionally biased stretch (basic and acidic residues) spans 1-11 (MSSACDHETEA). The segment at 1-61 (MSSACDHETE…PPKRRRPCGL (61 aa)) is disordered. The span at 22–33 (EENGSNSSTPTS) shows a compositional bias: polar residues. The active-site Proton acceptor is D155.

Belongs to the uracil-DNA glycosylase (UDG) superfamily. UNG family.

The protein localises to the host nucleus. The catalysed reaction is Hydrolyzes single-stranded DNA or mismatched double-stranded DNA and polynucleotides, releasing free uracil.. Excises uracil residues from the DNA which can arise as a result of misincorporation of dUMP residues by DNA polymerase or deamination of cytosines. Therefore may reduce deleterious uracil incorporation into the viral genome, particularly in terminally differentiated cells which lack DNA repair enzymes. This Equine herpesvirus 1 (strain V592) (EHV-1) protein is Uracil-DNA glycosylase (61).